The primary structure comprises 556 residues: Potassium-transporting ATPase potassium-binding subunit (556 aa).

A run of 10 helical transmembrane segments spans residues 6-26 (AGLI…VPLG), 65-85 (GVLA…LVQG), 133-153 (GLAV…VALV), 176-196 (LRIL…GGAI), 249-269 (PTAW…FSLP), 283-303 (YAIA…MLWF), 378-398 (GLYG…LMVG), 419-439 (YFLV…ALPG), 483-503 (ALGL…LALA), and 526-546 (FVGM…LPML).

It belongs to the KdpA family. The system is composed of three essential subunits: KdpA, KdpB and KdpC.

The protein resides in the cell membrane. Its function is as follows. Part of the high-affinity ATP-driven potassium transport (or Kdp) system, which catalyzes the hydrolysis of ATP coupled with the electrogenic transport of potassium into the cytoplasm. This subunit binds the extracellular potassium ions and delivers the ions to the membrane domain of KdpB through an intramembrane tunnel. The sequence is that of Potassium-transporting ATPase potassium-binding subunit from Mycobacterium avium (strain 104).